Here is a 215-residue protein sequence, read N- to C-terminus: tRNA (guanine-N(7)-)-methyltransferase (215 aa).

S-adenosyl-L-methionine-binding residues include Glu-43, Glu-68, Asp-95, and Asp-117. Asp-117 is an active-site residue. Residues Lys-121, Asp-153, and Thr-190–Glu-193 contribute to the substrate site.

It belongs to the class I-like SAM-binding methyltransferase superfamily. TrmB family.

The catalysed reaction is guanosine(46) in tRNA + S-adenosyl-L-methionine = N(7)-methylguanosine(46) in tRNA + S-adenosyl-L-homocysteine. It functions in the pathway tRNA modification; N(7)-methylguanine-tRNA biosynthesis. Catalyzes the formation of N(7)-methylguanine at position 46 (m7G46) in tRNA. The chain is tRNA (guanine-N(7)-)-methyltransferase from Staphylococcus epidermidis (strain ATCC 35984 / DSM 28319 / BCRC 17069 / CCUG 31568 / BM 3577 / RP62A).